A 143-amino-acid polypeptide reads, in one-letter code: MQLNNLKPAAGSKHAKRRVGRGIGSGLGKTAGRGHKGQKSRSGGFHKVGFEGGQMPLHRRLPKRGFTSLTKEFTAEVRLGDLAGLPIEEVDLLSLKQAGLVGEMVKSAKVILSGEIDKKVTLKGIGATAGAKAAIEAAGGSLA.

Positions 1-57 (MQLNNLKPAAGSKHAKRRVGRGIGSGLGKTAGRGHKGQKSRSGGFHKVGFEGGQMPL) are disordered. A compositionally biased stretch (gly residues) spans 21 to 31 (RGIGSGLGKTA).

The protein belongs to the universal ribosomal protein uL15 family. In terms of assembly, part of the 50S ribosomal subunit.

Binds to the 23S rRNA. This Ralstonia pickettii (strain 12J) protein is Large ribosomal subunit protein uL15.